The sequence spans 362 residues: 3-dehydroquinate synthase (362 aa).

NAD(+) contacts are provided by residues 71–76 (DGEQYK), 105–109 (GVIGD), 129–130 (TT), Lys142, Lys151, and 169–172 (CLST). Residues Glu184, His247, and His264 each contribute to the Zn(2+) site.

Belongs to the sugar phosphate cyclases superfamily. Dehydroquinate synthase family. The cofactor is Co(2+). Zn(2+) serves as cofactor. It depends on NAD(+) as a cofactor.

The protein localises to the cytoplasm. The enzyme catalyses 7-phospho-2-dehydro-3-deoxy-D-arabino-heptonate = 3-dehydroquinate + phosphate. It participates in metabolic intermediate biosynthesis; chorismate biosynthesis; chorismate from D-erythrose 4-phosphate and phosphoenolpyruvate: step 2/7. Functionally, catalyzes the conversion of 3-deoxy-D-arabino-heptulosonate 7-phosphate (DAHP) to dehydroquinate (DHQ). This chain is 3-dehydroquinate synthase, found in Vibrio atlanticus (strain LGP32) (Vibrio splendidus (strain Mel32)).